Consider the following 477-residue polypeptide: Iroquois homeobox protein 6a (477 aa).

Positions 148 to 210 (GSTRRKNATR…NARRRLKKEN (63 aa)) form a DNA-binding region, homeobox. Disordered stretches follow at residues 209–282 (ENKM…PDIP) and 303–323 (DYLD…QSTS). Positions 219 to 237 (KAGDDRKEDLDSKDSKDEQ) are enriched in basic and acidic residues. Over residues 243–253 (DLDDMEDEDCD) the composition is skewed to acidic residues. Positions 254 to 264 (KLDSDCEKSGQ) are enriched in basic and acidic residues. Positions 310–321 (SKPQQQQPSPQS) are enriched in low complexity.

This sequence belongs to the TALE/IRO homeobox family.

Its subcellular location is the nucleus. Its function is as follows. Transcription factor. Binds to the iroquois binding site (IBS) motif of target genes to regulate gene expression; functions as a transcriptional activator or repressor. In concert with irx5a, plays a role in visual performance. This is Iroquois homeobox protein 6a from Danio rerio (Zebrafish).